We begin with the raw amino-acid sequence, 392 residues long: L-rhamnonate dehydratase (392 aa).

Residues His-22 and Arg-48 each coordinate substrate. 3 residues coordinate Mg(2+): Asp-214, Glu-240, and Glu-268. Residue His-318 is the Proton acceptor of the active site. Glu-338 is a substrate binding site.

Belongs to the mandelate racemase/muconate lactonizing enzyme family. RhamD subfamily. In terms of assembly, homooctamer; tetramer of dimers. It depends on Mg(2+) as a cofactor.

The enzyme catalyses L-rhamnonate = 2-dehydro-3-deoxy-L-rhamnonate + H2O. Its function is as follows. Catalyzes the dehydration of L-rhamnonate to 2-keto-3-deoxy-L-rhamnonate (KDR). This chain is L-rhamnonate dehydratase, found in Burkholderia ambifaria (strain ATCC BAA-244 / DSM 16087 / CCUG 44356 / LMG 19182 / AMMD) (Burkholderia cepacia (strain AMMD)).